An 83-amino-acid polypeptide reads, in one-letter code: Small ribosomal subunit protein bS16 (83 aa).

The protein belongs to the bacterial ribosomal protein bS16 family.

The sequence is that of Small ribosomal subunit protein bS16 from Herminiimonas arsenicoxydans.